The following is a 97-amino-acid chain: Co-chaperonin GroES (97 aa).

The protein belongs to the GroES chaperonin family. Heptamer of 7 subunits arranged in a ring. Interacts with the chaperonin GroEL.

The protein resides in the cytoplasm. Its function is as follows. Together with the chaperonin GroEL, plays an essential role in assisting protein folding. The GroEL-GroES system forms a nano-cage that allows encapsulation of the non-native substrate proteins and provides a physical environment optimized to promote and accelerate protein folding. GroES binds to the apical surface of the GroEL ring, thereby capping the opening of the GroEL channel. This is Co-chaperonin GroES from Bifidobacterium longum (strain NCC 2705).